The chain runs to 367 residues: Glutamate 5-kinase (367 aa).

Position 10 (K10) interacts with ATP. Substrate is bound by residues S50, D137, and N149. ATP contacts are provided by residues 169–170 (TD) and 211–217 (TGGMGTK). A PUA domain is found at 275–353 (AGEITVDAGA…QQIDAILGYE (79 aa)).

Belongs to the glutamate 5-kinase family.

The protein localises to the cytoplasm. It catalyses the reaction L-glutamate + ATP = L-glutamyl 5-phosphate + ADP. It functions in the pathway amino-acid biosynthesis; L-proline biosynthesis; L-glutamate 5-semialdehyde from L-glutamate: step 1/2. In terms of biological role, catalyzes the transfer of a phosphate group to glutamate to form L-glutamate 5-phosphate. The polypeptide is Glutamate 5-kinase (Klebsiella pneumoniae subsp. pneumoniae (strain ATCC 700721 / MGH 78578)).